A 234-amino-acid polypeptide reads, in one-letter code: AA9 family lytic polysaccharide monooxygenase D (234 aa).

The first 18 residues, 1–18, serve as a signal peptide directing secretion; sequence MRIEKLLNAALLAGAVSA. 2 residues coordinate Cu(2+): His19 and His95. A disulfide bridge connects residues Cys57 and Cys182. His168 and Gln177 together coordinate O2. Cu(2+) is bound at residue Tyr179.

It belongs to the polysaccharide monooxygenase AA9 family. The cofactor is Cu(2+).

The protein localises to the secreted. It catalyses the reaction [(1-&gt;4)-beta-D-glucosyl]n+m + reduced acceptor + O2 = 4-dehydro-beta-D-glucosyl-[(1-&gt;4)-beta-D-glucosyl]n-1 + [(1-&gt;4)-beta-D-glucosyl]m + acceptor + H2O.. In terms of biological role, lytic polysaccharide monooxygenase (LPMO) that depolymerizes crystalline and amorphous polysaccharides via the oxidation of scissile alpha- or beta-(1-4)-glycosidic bonds, yielding C1 or C4 oxidation products. Catalysis by LPMOs requires the reduction of the active-site copper from Cu(II) to Cu(I) by a reducing agent and H(2)O(2) or O(2) as a cosubstrate. This Malbranchea cinnamomea (Thermophilic fungus) protein is AA9 family lytic polysaccharide monooxygenase D.